A 62-amino-acid polypeptide reads, in one-letter code: Large ribosomal subunit protein eL24 (62 aa).

Residues Cys-6, Cys-9, Cys-32, and Cys-36 each contribute to the Zn(2+) site. The C4-type zinc-finger motif lies at Cys-6–Cys-36.

Belongs to the eukaryotic ribosomal protein eL24 family. Part of the 50S ribosomal subunit. Forms a cluster with proteins L3 and L14. Zn(2+) serves as cofactor.

Functionally, binds to the 23S rRNA. This Methanococcus maripaludis (strain C7 / ATCC BAA-1331) protein is Large ribosomal subunit protein eL24.